Reading from the N-terminus, the 106-residue chain is ATP-dependent Clp protease adapter protein ClpS (106 aa).

The segment covering 1–10 has biased composition (basic and acidic residues); the sequence is MSQKTVHDQD. Residues 1 to 23 form a disordered region; it reads MSQKTVHDQDNALLLETGNTKVA.

This sequence belongs to the ClpS family. In terms of assembly, binds to the N-terminal domain of the chaperone ClpA.

Its function is as follows. Involved in the modulation of the specificity of the ClpAP-mediated ATP-dependent protein degradation. The protein is ATP-dependent Clp protease adapter protein ClpS of Xylella fastidiosa (strain M23).